Here is a 605-residue protein sequence, read N- to C-terminus: Arginyl-tRNA--protein transferase 2 (605 aa).

The span at 496-513 shows a compositional bias: low complexity; that stretch reads KVSSSSSSPQASETLLES. Residues 496 to 549 form a disordered region; the sequence is KVSSSSSSPQASETLLESTSEHEDMEQGDTNDDDDEMYNSDEDSDSDSSSSRNR. A compositionally biased stretch (acidic residues) spans 518 to 541; sequence EDMEQGDTNDDDDEMYNSDEDSDS.

This sequence belongs to the R-transferase family.

The catalysed reaction is an N-terminal L-alpha-aminoacyl-[protein] + L-arginyl-tRNA(Arg) = an N-terminal L-arginyl-L-aminoacyl-[protein] + tRNA(Arg) + H(+). In terms of biological role, involved in the post-translational conjugation of arginine to the N-terminal aspartate or glutamate of a protein. This arginylation is required for degradation of the protein via the ubiquitin pathway. Component of the N-end rule pathway with ATE1 and PRT6. The N-end rule pathway regulates seed after-ripening, seedling sugar sensitivity, seedling lipid breakdown, and abscisic acid (ABA) sensitivity of germination. The end-rule pathway regulates various aspects of leaf and shoot development. Involved in the oxygen-dependent N-arginylation of RAP2-12, an activator of hypoxic gene expression. This N-terminal modification leads to ubiquitination by PRT6 and subsequent degradation of RAP2-12 under aerobic conditions. Involved in disease resistance. The end-rule pathway plays a role in regulating the timing and amplitude of the immune response following infection with the bacterial pathogen Pseudomonas syringae pv tomato. Regulates the biosynthesis of plant-defense metabolites such as glucosinolates, and the biosynthesis and response to the phytohormone jasmonate (JA), which plays a key role in plant immunity. The sequence is that of Arginyl-tRNA--protein transferase 2 from Arabidopsis thaliana (Mouse-ear cress).